Reading from the N-terminus, the 485-residue chain is Putative E3 ubiquitin-protein ligase makorin-4 (485 aa).

The span at 1-32 shows a compositional bias: low complexity; sequence MAEAAAPGTTVTTSGAGAAAAEAAETAEAVSP. The disordered stretch occupies residues 1-63; the sequence is MAEAAAPGTT…GSDGSGGRGD (63 aa). Positions 45–63 are enriched in gly residues; the sequence is AGGGVGGSDGSDGSGGRGD. C3H1-type zinc fingers lie at residues 90 to 117, 124 to 146, and 243 to 270; these read WTKQ…HDLS, VCKY…HSKP, and ETKK…HGDL. The segment at 271–298 is makorin-type Cys-His; it reads CDMCGLQVLHPMDAAQRSQHIQACIEAH. Residues 316–370 form an RING-type zinc finger; the sequence is CGICMEVVYEKANPNEHRFGILSNCNHTFCLKCIRKWRSAKEFESRIVKSCPQCR. The C3H1-type 4 zinc finger occupies 399–428; the sequence is AMSNKACKYFDEGRGSCPFGENCFYKHMYP.

It catalyses the reaction S-ubiquitinyl-[E2 ubiquitin-conjugating enzyme]-L-cysteine + [acceptor protein]-L-lysine = [E2 ubiquitin-conjugating enzyme]-L-cysteine + N(6)-ubiquitinyl-[acceptor protein]-L-lysine.. It functions in the pathway protein modification; protein ubiquitination. In terms of biological role, may act as a E3 ubiquitin ligase catalyzing the covalent attachment of ubiquitin moieties onto substrate proteins. In Homo sapiens (Human), this protein is Putative E3 ubiquitin-protein ligase makorin-4 (MKRN4P).